The chain runs to 142 residues: Large ribosomal subunit protein uL11 (142 aa).

It belongs to the universal ribosomal protein uL11 family. In terms of assembly, part of the ribosomal stalk of the 50S ribosomal subunit. Interacts with L10 and the large rRNA to form the base of the stalk. L10 forms an elongated spine to which L12 dimers bind in a sequential fashion forming a multimeric L10(L12)X complex. One or more lysine residues are methylated.

Forms part of the ribosomal stalk which helps the ribosome interact with GTP-bound translation factors. The sequence is that of Large ribosomal subunit protein uL11 from Aeromonas hydrophila subsp. hydrophila (strain ATCC 7966 / DSM 30187 / BCRC 13018 / CCUG 14551 / JCM 1027 / KCTC 2358 / NCIMB 9240 / NCTC 8049).